The chain runs to 503 residues: Serine/threonine-protein kinase chk-1 (503 aa).

Residues 24 to 286 enclose the Protein kinase domain; sequence YRVVQTLGEG…IEQIQADPWY (263 aa). ATP is bound by residues 30–38 and lysine 54; that span reads LGEGAFGEV. The active-site Proton acceptor is the aspartate 150. Residues 320 to 346 form a disordered region; sequence SAKRRHLETPNEKSTLAERQNASFSQP. Positions 331-346 are enriched in polar residues; it reads EKSTLAERQNASFSQP. Residue serine 344 is modified to Phosphoserine.

This sequence belongs to the protein kinase superfamily. CAMK Ser/Thr protein kinase family. NIM1 subfamily. As to expression, expressed in the germline.

It localises to the cytoplasm. Its subcellular location is the nucleus. It is found in the perinuclear region. It carries out the reaction L-seryl-[protein] + ATP = O-phospho-L-seryl-[protein] + ADP + H(+). The catalysed reaction is L-threonyl-[protein] + ATP = O-phospho-L-threonyl-[protein] + ADP + H(+). Serine/threonine-protein kinase which is required for checkpoint-mediated cell cycle arrest and activation of DNA repair in response to the presence of DNA damage or unreplicated DNA. May also negatively regulate cell cycle progression during unperturbed cell cycles. Required for checkpoint mediated cell cycle arrest in response to DNA damage in germline cells. Delays cell-cycle reentry of the Z2 and Z3 primordial germ cells in response to transcription-induced DNA damage as they emerge from cell cycle arrest in L1 larvae. Essential for embryogenesis. The polypeptide is Serine/threonine-protein kinase chk-1 (Caenorhabditis elegans).